The chain runs to 2078 residues: Autophagy-related protein 2 homolog B (2078 aa).

A Chorein N-terminal domain is found at 13–108 (ACRYLLQRYL…EMVFRPRPRP (96 aa)). Phosphoserine occurs at positions 255 and 379. Residues 473 to 495 (GSTFPSNLVHPTPLQKTSLPSRS) are disordered. Over residues 486–495 (LQKTSLPSRS) the composition is skewed to polar residues. Residues Ser497, Ser840, Ser886, Ser899, and Ser1008 each carry the phosphoserine modification. Residues 868–888 (EEEENDGHYQEEEEGGAHSLK) are disordered. Over residues 873 to 888 (DGHYQEEEEGGAHSLK) the composition is skewed to basic and acidic residues. Tyr1012 carries the phosphotyrosine modification. Ser1016 and Ser1018 each carry phosphoserine. Thr1022 carries the post-translational modification Phosphothreonine. The disordered stretch occupies residues 1375 to 1405 (ADMKPGAFQRRSKVDSSGRSSSRGPVLPEAD). At Ser1526 the chain carries Phosphoserine.

The protein belongs to the ATG2 family. In terms of assembly, interacts with WDR45/WIPI4.

The protein resides in the preautophagosomal structure membrane. Its subcellular location is the lipid droplet. It localises to the endoplasmic reticulum membrane. The enzyme catalyses a 1,2-diacyl-sn-glycero-3-phospho-L-serine(in) = a 1,2-diacyl-sn-glycero-3-phospho-L-serine(out). It catalyses the reaction a 1,2-diacyl-sn-glycero-3-phosphoethanolamine(in) = a 1,2-diacyl-sn-glycero-3-phosphoethanolamine(out). Functionally, lipid transfer protein required for both autophagosome formation and regulation of lipid droplet morphology and dispersion. Tethers the edge of the isolation membrane (IM) to the endoplasmic reticulum (ER) and mediates direct lipid transfer from ER to IM for IM expansion. Binds to the ER exit site (ERES), which is the membrane source for autophagosome formation, and extracts phospholipids from the membrane source and transfers them to ATG9 (ATG9A or ATG9B) to the IM for membrane expansion. Lipid transfer activity is enhanced by WDR45/WIPI4, which promotes ATG2B-association with phosphatidylinositol 3-monophosphate (PI3P)-containing membranes. The sequence is that of Autophagy-related protein 2 homolog B from Homo sapiens (Human).